A 155-amino-acid polypeptide reads, in one-letter code: Large ribosomal subunit protein bL17 (155 aa).

The protein belongs to the bacterial ribosomal protein bL17 family. Part of the 50S ribosomal subunit. Contacts protein L32.

The polypeptide is Large ribosomal subunit protein bL17 (Syntrophotalea carbinolica (strain DSM 2380 / NBRC 103641 / GraBd1) (Pelobacter carbinolicus)).